Here is a 52-residue protein sequence, read N- to C-terminus: Ribosome modulation factor (52 aa).

This sequence belongs to the ribosome modulation factor family.

The protein localises to the cytoplasm. Its function is as follows. During stationary phase, converts 70S ribosomes to an inactive dimeric form (100S ribosomes). In Xenorhabdus nematophila (strain ATCC 19061 / DSM 3370 / CCUG 14189 / LMG 1036 / NCIMB 9965 / AN6), this protein is Ribosome modulation factor.